Reading from the N-terminus, the 1025-residue chain is MKQASISRFFKKVSAVNKEKVDQVKEVEKEAEVDEVLDLTLDSENDEEQQQETPVLEPIDGEEHPTVSKVPDLNDSRLLQKQKILNASKDITNSVDVSAFNEKLKDIMNKRKLGRIKGSLIDESDEIAEQSEADEHNIKKKRKKSDQLTPLDRQVKDLKLGNMDKVLVIRVGYKYKIFAQDAIIASTILHLQLIPGKVTIDDSNPNDSKYKQFAYCSFPDVRLKVHLERLVRSGLKVAVVEQSETATTKKFDNSKAKTSVFERKITGTYSKATYATNCEFEVNHENILGTNNSIWALDIEVSDSIYKYYLWSIQLSNGEVIYDSFEESKDNFSKVETRMKYLNPSEIVSPVVDSFPIKLKKRFLDLQLCQKNYDILAEDLNIPKKELLNNRLIELWHILYRYLKEYSNEKLLNIGSNYRHFSQKISIQLQAQTINNLDLISNDDSKGTLFWILDHTRTPFGKRLLKEWLLRPLLSKDAIVDRLNAIDCILESANSIFFESLNQMMKGIPDLLRTINRVSFGKTSQREVYFLLKQLTGVIKHFEAHKDYIEVEINSNSGAIKTKSTKLASIMTQMFEFSLSSVIPQLLLMINVSAVMEKDQKKQLLGFFHLNNYDNSENIIKMQRDIDSVKAQLHDELQNIKKILKRPHLAYKDEVDFLIEVRNTQVKGIPSDWVKVNNTKMISRFLTPRTKELVELLEYQNDLLYNEISKEYDQFLNRIASYYNEVKTFIMNLAEYDCLLSLAAVSCNVGYTRPVFTDSNEQLIIAKQARNPIIESLGVDYVPNDIEMEKDSGRVLVITGPNMGGKSSYIRQIALMVIMAQIGSYVPAESLKLSVFDNVLTRIGSQDNILQGQSTFKVELSETVEIINSCTSKTLLLLDEVGRGTSTRDGNAIAWALIKYFVEEEQCPFILFTTHFTIVTTVKSPLLKSYHMNYVQHKNENENWTTVVFLYQLKAGVTDSSYGLNVAKLAGIDTHIINRAHDVAISYKNDTEFDTNMILFQKVRNILANRTTARETLKVLLELDV.

Acidic residues predominate over residues 41 to 50 (LDSENDEEQQ). Disordered regions lie at residues 41-70 (LDSENDEEQQQETPVLEPIDGEEHPTVSKV) and 127-146 (IAEQSEADEHNIKKKRKKSD). The tract at residues 142–272 (RKKSDQLTPL…RKITGTYSKA (131 aa)) is mispair-binding domain. 800 to 807 (GPNMGGKS) is an ATP binding site.

It belongs to the DNA mismatch repair MutS family. MSH3 subfamily. Heterodimer consisting of MSH2-MSH3 (MutS beta). Forms a ternary complex with MutL alpha (MLH1-PMS1).

Its subcellular location is the nucleus. In terms of biological role, component of the post-replicative DNA mismatch repair system (MMR). Heterodimerizes with MSH2 to form MutS beta, which binds to DNA mismatches thereby initiating DNA repair. MSH3 provides substrate-binding and substrate specificity to the complex. When bound, the MutS beta heterodimer bends the DNA helix and shields approximately 20 base pairs. Acts mainly to repair insertion-deletion loops (IDLs) from 2 to 13 nucleotides in size, but can also repair base-base and single insertion-deletion mismatches that occur during replication. After mismatch binding, forms a ternary complex with the MutL alpha heterodimer, which is thought to be responsible for directing the downstream MMR events, including strand discrimination, excision, and resynthesis. ATP binding and hydrolysis play a pivotal role in mismatch repair functions. This chain is DNA mismatch repair protein MSH3 (MSH3), found in Candida glabrata (strain ATCC 2001 / BCRC 20586 / JCM 3761 / NBRC 0622 / NRRL Y-65 / CBS 138) (Yeast).